Reading from the N-terminus, the 486-residue chain is UDP-N-acetylmuramate--L-alanine ligase (486 aa).

An ATP-binding site is contributed by 126-132 (GTHGKTT).

The protein belongs to the MurCDEF family.

The protein localises to the cytoplasm. The enzyme catalyses UDP-N-acetyl-alpha-D-muramate + L-alanine + ATP = UDP-N-acetyl-alpha-D-muramoyl-L-alanine + ADP + phosphate + H(+). Its pathway is cell wall biogenesis; peptidoglycan biosynthesis. In terms of biological role, cell wall formation. In Pectobacterium carotovorum subsp. carotovorum (strain PC1), this protein is UDP-N-acetylmuramate--L-alanine ligase.